Reading from the N-terminus, the 435-residue chain is Serine carboxypeptidase-like 12 (435 aa).

An N-terminal signal peptide occupies residues 1 to 21 (MKSTPKLLLLLLFIINHHVDS). Intrachain disulfides connect C80–C323, C244–C258, and C282–C289. N101 carries N-linked (GlcNAc...) asparagine glycosylation. Residue S176 is part of the active site. N-linked (GlcNAc...) asparagine glycosylation is found at N313, N336, and N344. D360 is a catalytic residue. N376 is a glycosylation site (N-linked (GlcNAc...) asparagine). H413 is a catalytic residue. A glycan (N-linked (GlcNAc...) asparagine) is linked at N420.

This sequence belongs to the peptidase S10 family. Expressed in roots.

Its subcellular location is the secreted. In terms of biological role, probable carboxypeptidase. In Arabidopsis thaliana (Mouse-ear cress), this protein is Serine carboxypeptidase-like 12 (SCPL12).